We begin with the raw amino-acid sequence, 900 residues long: Bifunctional uridylyltransferase/uridylyl-removing enzyme (900 aa).

Positions 1-342 (MPQVDPELFD…PCEQPVQIQP (342 aa)) are uridylyltransferase. Residues 343 to 705 (LNSRFQLRDG…TTQREFESGS (363 aa)) form a uridylyl-removing region. In terms of domain architecture, HD spans 461-583 (VDAHTLNLIK…VGDQTHLDYL (123 aa)). ACT domains follow at residues 706-789 (QIFI…IIQR) and 816-891 (VLEV…DNGR).

The protein belongs to the GlnD family. Mg(2+) serves as cofactor.

The enzyme catalyses [protein-PII]-L-tyrosine + UTP = [protein-PII]-uridylyl-L-tyrosine + diphosphate. It carries out the reaction [protein-PII]-uridylyl-L-tyrosine + H2O = [protein-PII]-L-tyrosine + UMP + H(+). Uridylyltransferase (UTase) activity is inhibited by glutamine, while glutamine activates uridylyl-removing (UR) activity. In terms of biological role, modifies, by uridylylation and deuridylylation, the PII regulatory proteins (GlnB and homologs), in response to the nitrogen status of the cell that GlnD senses through the glutamine level. Under low glutamine levels, catalyzes the conversion of the PII proteins and UTP to PII-UMP and PPi, while under higher glutamine levels, GlnD hydrolyzes PII-UMP to PII and UMP (deuridylylation). Thus, controls uridylylation state and activity of the PII proteins, and plays an important role in the regulation of nitrogen assimilation and metabolism. The protein is Bifunctional uridylyltransferase/uridylyl-removing enzyme of Pseudomonas aeruginosa (strain ATCC 15692 / DSM 22644 / CIP 104116 / JCM 14847 / LMG 12228 / 1C / PRS 101 / PAO1).